The following is a 95-amino-acid chain: Aspartyl/glutamyl-tRNA(Asn/Gln) amidotransferase subunit C (95 aa).

It belongs to the GatC family. In terms of assembly, heterotrimer of A, B and C subunits.

It catalyses the reaction L-glutamyl-tRNA(Gln) + L-glutamine + ATP + H2O = L-glutaminyl-tRNA(Gln) + L-glutamate + ADP + phosphate + H(+). The catalysed reaction is L-aspartyl-tRNA(Asn) + L-glutamine + ATP + H2O = L-asparaginyl-tRNA(Asn) + L-glutamate + ADP + phosphate + 2 H(+). In terms of biological role, allows the formation of correctly charged Asn-tRNA(Asn) or Gln-tRNA(Gln) through the transamidation of misacylated Asp-tRNA(Asn) or Glu-tRNA(Gln) in organisms which lack either or both of asparaginyl-tRNA or glutaminyl-tRNA synthetases. The reaction takes place in the presence of glutamine and ATP through an activated phospho-Asp-tRNA(Asn) or phospho-Glu-tRNA(Gln). The chain is Aspartyl/glutamyl-tRNA(Asn/Gln) amidotransferase subunit C from Hyphomonas neptunium (strain ATCC 15444).